The following is a 409-amino-acid chain: Epoxyqueuosine reductase (409 aa).

A disordered region spans residues 1–23 (MDRNPELAIADARPSQDGRAAPS). The active-site Proton donor is the Asp-178. The 4Fe-4S ferredoxin-type domain occupies 232 to 261 (AAPETPGAHCGSCTRCLGACPTGAIVAPYR). Residues Cys-241, Cys-244, Cys-247, Cys-251, Cys-267, Cys-294, Cys-297, and Cys-301 each contribute to the [4Fe-4S] cluster site.

Belongs to the QueG family. In terms of assembly, monomer. The cofactor is cob(II)alamin. It depends on [4Fe-4S] cluster as a cofactor.

It is found in the cytoplasm. The enzyme catalyses epoxyqueuosine(34) in tRNA + AH2 = queuosine(34) in tRNA + A + H2O. Its pathway is tRNA modification; tRNA-queuosine biosynthesis. Functionally, catalyzes the conversion of epoxyqueuosine (oQ) to queuosine (Q), which is a hypermodified base found in the wobble positions of tRNA(Asp), tRNA(Asn), tRNA(His) and tRNA(Tyr). The polypeptide is Epoxyqueuosine reductase (Burkholderia pseudomallei (strain K96243)).